The following is a 106-amino-acid chain: UPF0060 membrane protein Oant_2511 (106 aa).

The next 4 helical transmembrane spans lie at 3–23 (FAIY…FWAW), 30–50 (PLWL…LTLI), 60–80 (AAYG…AEGA), and 84–104 (RWDV…LFAP).

The protein belongs to the UPF0060 family.

Its subcellular location is the cell inner membrane. This chain is UPF0060 membrane protein Oant_2511, found in Brucella anthropi (strain ATCC 49188 / DSM 6882 / CCUG 24695 / JCM 21032 / LMG 3331 / NBRC 15819 / NCTC 12168 / Alc 37) (Ochrobactrum anthropi).